We begin with the raw amino-acid sequence, 298 residues long: N-acetylmuramic acid 6-phosphate etherase (298 aa).

The SIS domain occupies 55 to 218; sequence IHAQVSGGGR…STGLMIKSGK (164 aa). E83 (proton donor) is an active-site residue. E114 is an active-site residue.

This sequence belongs to the GCKR-like family. MurNAc-6-P etherase subfamily. Homodimer.

It carries out the reaction N-acetyl-D-muramate 6-phosphate + H2O = N-acetyl-D-glucosamine 6-phosphate + (R)-lactate. It participates in amino-sugar metabolism; 1,6-anhydro-N-acetylmuramate degradation. Its pathway is amino-sugar metabolism; N-acetylmuramate degradation. The protein operates within cell wall biogenesis; peptidoglycan recycling. Its function is as follows. Specifically catalyzes the cleavage of the D-lactyl ether substituent of MurNAc 6-phosphate, producing GlcNAc 6-phosphate and D-lactate. Together with AnmK, is also required for the utilization of anhydro-N-acetylmuramic acid (anhMurNAc) either imported from the medium or derived from its own cell wall murein, and thus plays a role in cell wall recycling. The chain is N-acetylmuramic acid 6-phosphate etherase from Shigella dysenteriae serotype 1 (strain Sd197).